The chain runs to 334 residues: D-aspartate oxidase 2 (334 aa).

FAD is bound by residues D38, K39, S46, G310, and T315.

It belongs to the DAMOX/DASOX family. FAD serves as cofactor. As to expression, expressed in the intestinal cells, pharyngeal muscles, and body wall muscles in adult hermaphrodites.

The protein localises to the cytoplasm. The enzyme catalyses D-aspartate + O2 + H2O = oxaloacetate + H2O2 + NH4(+). It carries out the reaction D-glutamate + O2 + H2O = H2O2 + 2-oxoglutarate + NH4(+). Its activity is regulated as follows. Inhibited by thiolactomycin. Functionally, selectively catalyzes the oxidative deamination of acidic amino acids. May play a role in the egg-laying events and early development of the worm, in addition to quality control of the germ cells. The chain is D-aspartate oxidase 2 (ddo-2) from Caenorhabditis elegans.